The sequence spans 323 residues: Phospho-N-acetylmuramoyl-pentapeptide-transferase (323 aa).

A run of 9 helical transmembrane segments spans residues 12–32, 58–78, 84–104, 120–140, 151–171, 177–197, 200–220, 229–250, and 303–323; these read IVMAIVISFIVASILGPIIIP, PTIGGLIFIFATIITMFVMVG, AMIALYSFVGFGFVGFLDDLL, MILLLIISGFLTWYAYKYIGT, INLGLFYIPAAMFYFAGVTNA, GLDGLATSVTVLVTTFLGIIS, LGHISLAIFCVALAGALLAFL, VFMGDTGSLALGGAVAMVALIL, and KIVSVFSIITVVFCFIAFASL.

This sequence belongs to the glycosyltransferase 4 family. MraY subfamily. Mg(2+) serves as cofactor.

Its subcellular location is the cell membrane. It catalyses the reaction UDP-N-acetyl-alpha-D-muramoyl-L-alanyl-gamma-D-glutamyl-meso-2,6-diaminopimeloyl-D-alanyl-D-alanine + di-trans,octa-cis-undecaprenyl phosphate = di-trans,octa-cis-undecaprenyl diphospho-N-acetyl-alpha-D-muramoyl-L-alanyl-D-glutamyl-meso-2,6-diaminopimeloyl-D-alanyl-D-alanine + UMP. Its pathway is cell wall biogenesis; peptidoglycan biosynthesis. Catalyzes the initial step of the lipid cycle reactions in the biosynthesis of the cell wall peptidoglycan: transfers peptidoglycan precursor phospho-MurNAc-pentapeptide from UDP-MurNAc-pentapeptide onto the lipid carrier undecaprenyl phosphate, yielding undecaprenyl-pyrophosphoryl-MurNAc-pentapeptide, known as lipid I. This is Phospho-N-acetylmuramoyl-pentapeptide-transferase from Clostridium perfringens (strain SM101 / Type A).